Consider the following 128-residue polypeptide: Con-Ins F2b (128 aa).

The signal sequence occupies residues 1–24 (MTTSSYFLLVALGLLLYVCRSSFG). 4 disulfides stabilise this stretch: Cys29/Cys104, Cys41/Cys107, Cys53/Cys120, and Cys106/Cys111. A propeptide spans 59–89 (LQGGTGKKRGRASLLRKRRAFLSMLKARAKR) (c peptide). Residue Glu115 is modified to 4-carboxyglutamate; partial. The residue at position 127 (Ser127) is a Serine amide.

Belongs to the insulin family. In terms of assembly, heterodimer of A and B chains; disulfide-linked. In terms of tissue distribution, expressed by the venom gland.

The protein resides in the secreted. Functionally, this venom insulin facilitates prey capture by rapidly inducing hypoglycemic shock. Intraperitoneal injection of this peptide into zebrafish lowers blood glucose with the same potency than human insulin. In vivo, when applied to water, this peptide reduces overall locomotor activity of zebrafish larvae, observed as a significant decrease in the percentage of time spent swimming and movement frequency. This Conus floridulus (Cone snail) protein is Con-Ins F2b.